The following is a 253-amino-acid chain: 3-deoxy-manno-octulosonate cytidylyltransferase (253 aa).

Belongs to the KdsB family.

The protein resides in the cytoplasm. The enzyme catalyses 3-deoxy-alpha-D-manno-oct-2-ulosonate + CTP = CMP-3-deoxy-beta-D-manno-octulosonate + diphosphate. The protein operates within nucleotide-sugar biosynthesis; CMP-3-deoxy-D-manno-octulosonate biosynthesis; CMP-3-deoxy-D-manno-octulosonate from 3-deoxy-D-manno-octulosonate and CTP: step 1/1. Its pathway is bacterial outer membrane biogenesis; lipopolysaccharide biosynthesis. Activates KDO (a required 8-carbon sugar) for incorporation into bacterial lipopolysaccharide in Gram-negative bacteria. The protein is 3-deoxy-manno-octulosonate cytidylyltransferase of Acinetobacter baumannii (strain ATCC 17978 / DSM 105126 / CIP 53.77 / LMG 1025 / NCDC KC755 / 5377).